The primary structure comprises 171 residues: MAVLQVLHFPDERLRTIAKPVHEVTPEIQRIVDDMFETMYAEEGIGLAATQVDIHQRIIVIDVSENRDQRLVLINPELLQHDGEAGIEEGCLSVPEQRALVTRAENIKVRALDRDGKSFELETDGLLAICIQHEMDHLMGKLFIDYLSPLKRQRIRQKLEKLYKQQARAVN.

The Fe cation site is built by Cys-91 and His-133. Glu-134 is an active-site residue. Residue His-137 participates in Fe cation binding.

It belongs to the polypeptide deformylase family. Requires Fe(2+) as cofactor.

It catalyses the reaction N-terminal N-formyl-L-methionyl-[peptide] + H2O = N-terminal L-methionyl-[peptide] + formate. Functionally, removes the formyl group from the N-terminal Met of newly synthesized proteins. Requires at least a dipeptide for an efficient rate of reaction. N-terminal L-methionine is a prerequisite for activity but the enzyme has broad specificity at other positions. This Edwardsiella ictaluri (strain 93-146) protein is Peptide deformylase.